The following is a 399-amino-acid chain: Ribonuclease D (399 aa).

In terms of domain architecture, 3'-5' exonuclease spans 31-197 (RVVTDNTALL…PLYHILEKEL (167 aa)). An HRDC domain is found at 239 to 318 (NPLELSRLRV…SQARRISSND (80 aa)).

The protein belongs to the RNase D family. A divalent metal cation is required as a cofactor.

Its subcellular location is the cytoplasm. The catalysed reaction is Exonucleolytic cleavage that removes extra residues from the 3'-terminus of tRNA to produce 5'-mononucleotides.. In terms of biological role, exonuclease involved in the 3' processing of various precursor tRNAs. Initiates hydrolysis at the 3'-terminus of an RNA molecule and releases 5'-mononucleotides. The chain is Ribonuclease D from Haemophilus influenzae (strain ATCC 51907 / DSM 11121 / KW20 / Rd).